Consider the following 108-residue polypeptide: Zinc finger protein 475 (108 aa).

2 consecutive C2HC/C3H-type zinc fingers follow at residues 6–35 (PAVV…KWHN) and 79–108 (QLVP…KAAK). Zn(2+) is bound by residues Cys10, Cys13, His25, Cys29, Cys83, Cys86, His98, and Cys102.

It depends on Zn(2+) as a cofactor.

This chain is Zinc finger protein 475, found in Homo sapiens (Human).